We begin with the raw amino-acid sequence, 331 residues long: Pectate lyase B (331 aa).

The N-terminal stretch at 1–25 is a signal peptide; it reads MKFTGSPLLWPSWLPLPAPPPPLPS. Residue Asn-99 is glycosylated (N-linked (GlcNAc...) asparagine). Ca(2+)-binding residues include Asp-139, Asp-169, and Asp-173. The active site involves Arg-226.

This sequence belongs to the polysaccharide lyase 1 family. Requires Ca(2+) as cofactor.

It is found in the secreted. The enzyme catalyses Eliminative cleavage of (1-&gt;4)-alpha-D-galacturonan to give oligosaccharides with 4-deoxy-alpha-D-galact-4-enuronosyl groups at their non-reducing ends.. The protein operates within glycan metabolism; pectin degradation; 2-dehydro-3-deoxy-D-gluconate from pectin: step 2/5. Functionally, acts as a virulence factor active in plant tissue maceration. The sequence is that of Pectate lyase B (PLB) from Colletotrichum gloeosporioides (Anthracnose fungus).